Consider the following 335-residue polypeptide: E3 ubiquitin ligase rnf-121 (335 aa).

The Cytoplasmic portion of the chain corresponds to 1-47 (MGQHGAIRLQNEVQEGMPPPHELTEEEQWAEEHRKMHEKHKGHEAMH). The helical transmembrane segment at 48–68 (MEMMVIFMISVIVGQIFLVTW) threads the bilayer. The Lumenal portion of the chain corresponds to 69–72 (KRKH). The chain crosses the membrane as a helical span at residues 73–93 (FKSYQMCTLIGMLTIPVYVCF). Residues 94-99 (NRSWYR) are Cytoplasmic-facing. A helical transmembrane segment spans residues 100–120 (FLATWLVFCIFSAFIWLKASA). At 121 to 143 (QHISGGTPRFVYKWFLFLHKLSY) the chain is on the lumenal side. Residues 144–164 (VLGVVGYLIMMGALLGFHVLF) traverse the membrane as a helical segment. Residues 165–168 (GVSQ) lie on the Cytoplasmic side of the membrane. Residues 169–189 (PTLMDAGILFMFYGVYYGVLG) traverse the membrane as a helical segment. Residues 190-335 (RDFAHICTAR…QGLTTWMGLE (146 aa)) lie on the Lumenal side of the membrane. The RING-type; atypical zinc finger occupies 222 to 284 (CAVCGGRLDD…GKLQTCPYCK (63 aa)).

Belongs to the RNF121 family. As to expression, expressed in body wall muscles, the hypodermis, seam cells, vulval cells, spermathecal cells, uterine cells and the distal tip cell (at protein level).

The protein localises to the endoplasmic reticulum membrane. Its subcellular location is the golgi apparatus membrane. It carries out the reaction S-ubiquitinyl-[E2 ubiquitin-conjugating enzyme]-L-cysteine + [acceptor protein]-L-lysine = [E2 ubiquitin-conjugating enzyme]-L-cysteine + N(6)-ubiquitinyl-[acceptor protein]-L-lysine.. It participates in protein modification; protein ubiquitination. E3 ubiquitin ligase which accepts ubiquitin and transfers it to substrates such as the beta-integrin subunit pat-3, promoting their degradation by the endoplasmic reticulum-associated degradation (ERAD) pathway which is a pathway involved in ubiquitin-dependent degradation of misfolded endoplasmic reticulum proteins. Negatively regulates the unfolded protein response to reduce endoplasmic reticulum stress. Required for the cessation of distal tip cell migration at the end of larval morphogenesis. Plays a role in germline and gonad development. This is E3 ubiquitin ligase rnf-121 from Caenorhabditis elegans.